A 95-amino-acid chain; its full sequence is Aspartyl/glutamyl-tRNA(Asn/Gln) amidotransferase subunit C (95 aa).

The span at 55 to 67 shows a compositional bias: basic and acidic residues; sequence ALERRNVTREDQV. The interval 55–83 is disordered; sequence ALERRNVTREDQVHNSLTNDKALENAPET.

Belongs to the GatC family. As to quaternary structure, heterotrimer of A, B and C subunits.

The catalysed reaction is L-glutamyl-tRNA(Gln) + L-glutamine + ATP + H2O = L-glutaminyl-tRNA(Gln) + L-glutamate + ADP + phosphate + H(+). It catalyses the reaction L-aspartyl-tRNA(Asn) + L-glutamine + ATP + H2O = L-asparaginyl-tRNA(Asn) + L-glutamate + ADP + phosphate + 2 H(+). Allows the formation of correctly charged Asn-tRNA(Asn) or Gln-tRNA(Gln) through the transamidation of misacylated Asp-tRNA(Asn) or Glu-tRNA(Gln) in organisms which lack either or both of asparaginyl-tRNA or glutaminyl-tRNA synthetases. The reaction takes place in the presence of glutamine and ATP through an activated phospho-Asp-tRNA(Asn) or phospho-Glu-tRNA(Gln). In Natranaerobius thermophilus (strain ATCC BAA-1301 / DSM 18059 / JW/NM-WN-LF), this protein is Aspartyl/glutamyl-tRNA(Asn/Gln) amidotransferase subunit C.